Consider the following 490-residue polypeptide: B3 domain-containing protein REM14 (490 aa).

3 consecutive DNA-binding regions (TF-B3) follow at residues 3-95, 130-226, and 236-333; these read NQHF…LGPS, CFSA…LPKG, and CFVA…LSNE. The tract at residues 343–367 is disordered; it reads NEVESLSTDQESHEESSHNEKISRR. A compositionally biased stretch (basic and acidic residues) spans 352-364; it reads QESHEESSHNEKI. A DNA-binding region (TF-B3 4) is located at residues 387–484; that stretch reads FVTLNLTPYN…TSCVLKFCSK (98 aa).

The protein resides in the nucleus. This is B3 domain-containing protein REM14 (REM14) from Arabidopsis thaliana (Mouse-ear cress).